The chain runs to 374 residues: MDLEKTRDNLKNNVFGRFFLYVLSKGYELGTIVNKFLYENGWRKSYSVNTRVVCVGNITAGGTGKTTAVLLAARTLAEAGIRTAIISRGYKRDKKNKNPVVLFDDELENNWVTAGDEPFMMSRALADVKVPIVIHEDRHLAATEALKRFKSQVLLLDDGFQHFRLKRDANIVLIDARNPFGGGQLLPYGTLREGLSGLKRANLVLLTHSNQADQRKKEDIKDQIRLQNEDIEILEAVHQPEHYFDICNSVKVPLNHLKGEAGVFSAIGEPGGFEDTLKDLGLKLVKVWRYPDHRRYTEEDLKTFVDLAGENPLVTTFKDFVKFPENWRDILKKNVYVLSVSMKIKGKKEFDIFAEALYPKFTNLNVKKESKSRK.

59–66 (TAGGTGKT) provides a ligand contact to ATP.

This sequence belongs to the LpxK family.

The enzyme catalyses a lipid A disaccharide + ATP = a lipid IVA + ADP + H(+). The protein operates within glycolipid biosynthesis; lipid IV(A) biosynthesis; lipid IV(A) from (3R)-3-hydroxytetradecanoyl-[acyl-carrier-protein] and UDP-N-acetyl-alpha-D-glucosamine: step 6/6. Its function is as follows. Transfers the gamma-phosphate of ATP to the 4'-position of a tetraacyldisaccharide 1-phosphate intermediate (termed DS-1-P) to form tetraacyldisaccharide 1,4'-bis-phosphate (lipid IVA). The protein is Tetraacyldisaccharide 4'-kinase of Elusimicrobium minutum (strain Pei191).